The following is a 97-amino-acid chain: Protein E7 (97 aa).

The segment at 1-41 (MHGNYPTLKEIVLELDPPDPVGLHCNEQLDSSEDEVDELAT) is E7 terminal domain. Positions 23 to 27 (LHCNE) match the LXCXE motif; interaction with host RB1 and TMEM173/STING motif. The segment at 57–93 (CGTCNRNVRLVVQCTGTDICQLHTLLLGSLEILCPVC) is a zinc-finger region. A Nuclear export signal motif is present at residues 75 to 83 (ICQLHTLLL).

This sequence belongs to the papillomaviridae E7 protein family. In terms of assembly, homodimer. Homooligomer. Interacts with host RB1; this interaction induces dissociation of RB1-E2F1 complex thereby disrupting RB1 activity. Interacts with host EP300; this interaction represses EP300 transcriptional activity. Interacts with protein E2; this interaction inhibits E7 oncogenic activity. Interacts with host TMEM173/STING; this interaction impairs the ability of TMEM173/STING to sense cytosolic DNA and promote the production of type I interferon (IFN-alpha and IFN-beta). Highly phosphorylated.

It localises to the host cytoplasm. It is found in the host nucleus. In terms of biological role, plays a role in viral genome replication by driving entry of quiescent cells into the cell cycle. Stimulation of progression from G1 to S phase allows the virus to efficiently use the cellular DNA replicating machinery to achieve viral genome replication. E7 protein has both transforming and trans-activating activities. Induces the disassembly of the E2F1 transcription factor from RB1, with subsequent transcriptional activation of E2F1-regulated S-phase genes. Interferes with host histone deacetylation mediated by HDAC1 and HDAC2, leading to transcription activation. Also plays a role in the inhibition of both antiviral and antiproliferative functions of host interferon alpha. Interaction with host TMEM173/STING impairs the ability of TMEM173/STING to sense cytosolic DNA and promote the production of type I interferon (IFN-alpha and IFN-beta). This is Protein E7 from Homo sapiens (Human).